A 305-amino-acid chain; its full sequence is Glycine--tRNA ligase alpha subunit (305 aa).

It belongs to the class-II aminoacyl-tRNA synthetase family. As to quaternary structure, tetramer of two alpha and two beta subunits.

It localises to the cytoplasm. It catalyses the reaction tRNA(Gly) + glycine + ATP = glycyl-tRNA(Gly) + AMP + diphosphate. This Streptococcus sanguinis (strain SK36) protein is Glycine--tRNA ligase alpha subunit.